A 468-amino-acid polypeptide reads, in one-letter code: Histone acetyltransferase type B catalytic subunit (468 aa).

Phosphoserine is present on S8. Interaction with histone H4 N-terminus regions lie at residues 44 to 46 (EEE) and 208 to 210 (YKF). Residues 248–250 (FLI) and 255–261 (QKSGNGS) contribute to the acetyl-CoA site. E283 (proton donor/acceptor) is an active-site residue. The interval 442 to 468 (SSNLKRKLDDDENTEGSSSKKARVEDA) is disordered.

It belongs to the HAT1 family. As to quaternary structure, component of the HAT-B complex composed of at least HAT1 and HAT2. The HAT-B complex binds to histone H4 tail. In the nucleus, interacts with GSK1 and SSB1. In the cytoplasm, interacts with ATG3 and ATG9. In terms of processing, phosphorylated at Ser-8 by GSK1 in the nucleus which impairs its translocation to the cytoplasm through interfering the interaction between HAT1 and SSB1. Dephosphorylation under nutrient starvation conditions promotes the interaction between HAT1 and SSB1 and results in the translocation of HAT1 from the nucleus to the cytoplasm in order to acetylate ATG3 and ATG9.

The protein resides in the nucleus. Its subcellular location is the cytoplasm. It localises to the preautophagosomal structure. It catalyses the reaction L-lysyl-[protein] + acetyl-CoA = N(6)-acetyl-L-lysyl-[protein] + CoA + H(+). Its function is as follows. Catalytic component of the histone acetylase B (HAT-B) complex. Has intrinsic substrate specificity that modifies lysine in recognition sequence GXGKXG. Involved in DNA double-strand break repair. Required for appressorium turgor pressure, autophagy and conidial nuclear degradation. During the germination process and upon starvation conditions, translocates from the nucleus to the cytoplasm where it acetylates ATG3 at 'lys-262' and 'Lys-267', thus influencing autophagy through controlling ATG3-ATG8 interaction. Also acetylates ATG9 at 'Lys-621' to regulate ATG9 binding to vesicles, which is also important for autophagy and pathogenicity. This chain is Histone acetyltransferase type B catalytic subunit, found in Pyricularia oryzae (strain 70-15 / ATCC MYA-4617 / FGSC 8958) (Rice blast fungus).